The primary structure comprises 64 residues: Long neurotoxin MS4 (64 aa).

5 cysteine pairs are disulfide-bonded: Cys-3-Cys-24, Cys-6-Cys-11, Cys-17-Cys-41, Cys-45-Cys-57, and Cys-58-Cys-63.

Belongs to the three-finger toxin family. Ancestral subfamily. In terms of tissue distribution, expressed by the venom gland.

It is found in the secreted. Functionally, produces peripheral paralysis by blocking neuromuscular transmission at the postsynaptic site. Weak inhibitor of the endogenous nicotinic acetylcholine receptors (nAChR) in the human rhabdomyosarcoma TE 671 cell line with an IC(50) of 690 mM. This neurotoxin is lethal to zebrafish by injection at the back of the dorsolateral region, but is not toxic to mice by intraperitoneal injection. This Micrurus surinamensis (Surinam coral snake) protein is Long neurotoxin MS4.